The primary structure comprises 285 residues: Nucleotide-binding protein Geob_2284 (285 aa).

8-15 contributes to the ATP binding site; the sequence is GLSGSGKS. A GTP-binding site is contributed by 59 to 62; that stretch reads DIRG.

It belongs to the RapZ-like family.

In terms of biological role, displays ATPase and GTPase activities. The protein is Nucleotide-binding protein Geob_2284 of Geotalea daltonii (strain DSM 22248 / JCM 15807 / FRC-32) (Geobacter daltonii).